Reading from the N-terminus, the 156-residue chain is V-type proton ATPase 16 kDa proteolipid subunit c (156 aa).

The Lumenal portion of the chain corresponds to 1 to 7 (MAENPIY). Residues 8–30 (GPFFGVMGAASAIIFSALGAAYG) traverse the membrane as a helical segment. Residues 31–52 (TAKSGTGIAAMSVMRPELIMKS) are Cytoplasmic-facing. Residues 53-73 (IIPVVMAGIIAIYGLVVAVLI) traverse the membrane as a helical segment. Over 74–92 (AGSLDAPSNNYTLYKGFIH) the chain is Lumenal. Residues 93-114 (LGAGLAVGFSGLAAGFAIGIVG) traverse the membrane as a helical segment. Topologically, residues 115-126 (DAGVRGTAQQPR) are cytoplasmic. A helical membrane pass occupies residues 127–152 (LFVGMILILIFAEVLGLYGLIVAIYL). Residues 153 to 156 (YTKQ) are Lumenal-facing.

Belongs to the V-ATPase proteolipid subunit family. V-ATPase is a heteromultimeric enzyme made up of two complexes: the ATP-hydrolytic V1 complex and the proton translocation V0 complex. The V1 complex consists of three catalytic AB heterodimers that form a heterohexamer, three peripheral stalks each consisting of EG heterodimers, one central rotor including subunits D and F, and the regulatory subunits C and H. The proton translocation complex V0 consists of the proton transport subunit a, a ring of proteolipid subunits c9c'', rotary subunit d, subunits e and f, and the accessory subunits VhaAC45 and ATP6AP2.

It localises to the membrane. Functionally, proton-conducting pore forming subunit of the V0 complex of vacuolar(H+)-ATPase (V-ATPase), a multisubunit enzyme composed of a peripheral complex (V1) that hydrolyzes ATP and a membrane integral complex (V0) that translocates protons. V-ATPase is responsible for acidifying and maintaining the pH of intracellular compartments and in some cell types, is targeted to the plasma membrane, where it is responsible for acidifying the extracellular environment. The protein is V-type proton ATPase 16 kDa proteolipid subunit c (VHA16) of Heliothis virescens (Tobacco budworm moth).